A 379-amino-acid chain; its full sequence is Fimbrium subunit Fim1C (379 aa).

Positions 1-17 are cleaved as a signal peptide; sequence MEVKSLLMVMATLTIAG. The N-palmitoyl cysteine moiety is linked to residue cysteine 18. Cysteine 18 carries S-diacylglycerol cysteine lipidation. Residues 18 to 45 constitute a propeptide that is removed on maturation; the sequence is CSQNEMTEMNPDTNRTIGLDVYTEVQTR.

The protein belongs to the bacteroidetes fimbrillin superfamily. Mfa-like family. As to quaternary structure, may be part of the fimbrial tip.

The protein resides in the fimbrium. The protein localises to the cell outer membrane. Probably a component of the fimbrium tip. Fimbriae are filamentous appendages on the cell surface that mediate cell adhesion and biofilm formation. The chain is Fimbrium subunit Fim1C (fim1C) from Phocaeicola vulgatus (strain ATCC 8482 / DSM 1447 / JCM 5826 / CCUG 4940 / NBRC 14291 / NCTC 11154) (Bacteroides vulgatus).